Consider the following 196-residue polypeptide: C-type lectin domain family 2 member F (196 aa).

Residues 1–21 form a disordered region; sequence MNAQCLKKPEEGESSPGTGDK. Residues 1 to 41 lie on the Cytoplasmic side of the membrane; that stretch reads MNAQCLKKPEEGESSPGTGDKILQRNSLRAISPESSAKLYC. A helical; Signal-anchor for type II membrane protein transmembrane segment spans residues 42–62; sequence CCGVIMVLTVAVVALSVALPA. At 63–196 the chain is on the extracellular side; that stretch reads TKTEQILINK…SRSSNYMLQC (134 aa). A disulfide bond links cysteine 77 and cysteine 88. The C-type lectin domain occupies 84–187; it reads VGNKCFYFSE…DYIPRKWICS (104 aa). Asparagine 97 is a glycosylation site (N-linked (GlcNAc...) asparagine). Cysteine 105 and cysteine 186 are disulfide-bonded.

It is found in the cell membrane. Lectin-type cell surface receptor. The sequence is that of C-type lectin domain family 2 member F (Clec2f) from Mus musculus (Mouse).